Here is a 153-residue protein sequence, read N- to C-terminus: MKLNELYNNIGAKKNKKRIARGIGSGKGKTGGRGIKGQKSRSGVAIKGFEGGQTPMIKRLPKRGFNCISTKKYNIINIYNIEEALADGRLSADDNITKEKLVEARVVNNKNNKKLVKLLSICSDDFAAPLSLKLDAYSAKAKDLIEKAGGKLL.

Positions 21-41 (RGIGSGKGKTGGRGIKGQKSR) are disordered. Gly residues predominate over residues 23 to 35 (IGSGKGKTGGRGI).

The protein belongs to the universal ribosomal protein uL15 family. In terms of assembly, part of the 50S ribosomal subunit.

In terms of biological role, binds to the 23S rRNA. The protein is Large ribosomal subunit protein uL15 of Rickettsia rickettsii (strain Iowa).